The following is a 1462-amino-acid chain: MEVPRASPNQEPLCSISPSSLVINEIITVVTAIRKTTRWRNSGVASILGVSTLKDEFLADGLESRWKTNGEKSSSIRYPLVMEFSQLKEDLTNRASLNGYDSLKLLSPFLRTIKSPRMTGYITSLCLSAILKFFSFRIISEESPNLALSMRNLSFAITQCRFESFDASQDEAVLLRVSRLMEELLRGPGKAVLSDDSICEIVETGLSMCCQSRLSQVLRYSAELSMTSILEKIFERLKYIDVKTDSEDFWDASEEHSIKGEEFHYKKITEGDEISNEIDPFGIGSIREVFRVLVSFIDFGKQKFSDNIKAMALRFINTALEVSGSHISDFPSLRVLITDTLCKSLLQLIRSDHTALLTNSLLVMTTLLQAMPGSLKLQQELFISYLISCLHIPSTTPRERNVETSLHKVVSSLDLSEEISPDRATPTSFTERKRFAFDTRNRPPEVRELIVECLGSLSRIPYFLIDLYVNYDCDPQMSDLAIDLLKVLTRNCLVDSARYSTANVPPLCLDALLNFIYYFHEHLQPCYNDPNNTFKDDVAKTLIESKKRKAIIIEGAELFNESPSDGIAFLTQHSIIKQSDNPTCIVEFFHSTNRLSKRVLGEFLTKGSNSHILNAFISAFDFKGKRIDEALRLLLQSFRLPGESQLIERVLETFSHYYMSANPDSMSSKDAAFVLSYSIIMLNTDQHNPNIKSQRRMTLDDFCRNVRGVNDGQDFDRNFLSEIYKAIKENEIIVAEEHDTELSFLYIWSKLQQSVKITEPFKRSSSNVHDKIVFLEVWKSIMAALIYVFSTATEDTVFYRVVNGIQQATEVAAAYELNEPVDYAIERFCQFTALDPSSVPGTQLNTAIKVEDRIITVSELSVRFGRDFRAQLALLVLFWISSKFGNIIDASWPLLVQLTICLARNNLIDNSFLPGFKLFGYQWFPFPEPPLNSGKPALSKEGGLLSALSSYLSSYANDEPPCPTDEEIQHTLCTIDCISSAKIDNFLTKLVDLKQPGLNKLLDSLLSLSNPSTSLLTDENTVDDNKVSSVEALSNIQSAIVADLLTSLFLGTRESLNKLERRTQILSYLLFQIEQSGDEKVINQLSLYIFEMFMDDDLKLSENSEDWGLFSKLCNLLNDKNIVVRNQSLSLFHQLVNKYPFLLESWIGLQLVQSAVNTNTADIDDLYRLLSKIPTNLLDLPMFQVYLGCVDTLIQTIVKQIAQILSKQKKGASKGLPFDKSILDNHSAELNDAFNLFLKAAVEYKVDSNESSEHFQDTRWKIIYDHVCKLCLSRSRSLRAASLSCLQRIVVEQLDQPHEVSYTMALFHLVLLPTMENMITVLTEKPEHKIFGLAQAQMFNIICKTVLIDMNVLSAQKEMLHTLWLKLMDVAIKLSSIHGSESMAEVMESIKNVFMILHGAGALAGPTIEVDPEIPDHLIKTWNTTWNNLFIYYPELSNDLNINNEAEMKKENLKNPSQTTTV.

A helical transmembrane segment spans residues 119–139 (TGYITSLCLSAILKFFSFRII). Ser411 and Ser420 each carry phosphoserine. One can recognise an SEC7 domain in the interval 541-730 (TLIESKKRKA…SEIYKAIKEN (190 aa)). An HEAT repeat occupies 1102–1139 (ENSEDWGLFSKLCNLLNDKNIVVRNQSLSLFHQLVNKY).

It localises to the cytoplasm. It is found in the golgi apparatus membrane. This is an uncharacterized protein from Schizosaccharomyces pombe (strain 972 / ATCC 24843) (Fission yeast).